Consider the following 422-residue polypeptide: Glucose-1-phosphate adenylyltransferase (422 aa).

Alpha-D-glucose 1-phosphate contacts are provided by residues tyrosine 109, glycine 175, 190–191 (EK), and serine 208.

The protein belongs to the bacterial/plant glucose-1-phosphate adenylyltransferase family. As to quaternary structure, homotetramer.

It catalyses the reaction alpha-D-glucose 1-phosphate + ATP + H(+) = ADP-alpha-D-glucose + diphosphate. It participates in glycan biosynthesis; glycogen biosynthesis. Functionally, involved in the biosynthesis of ADP-glucose, a building block required for the elongation reactions to produce glycogen. Catalyzes the reaction between ATP and alpha-D-glucose 1-phosphate (G1P) to produce pyrophosphate and ADP-Glc. The protein is Glucose-1-phosphate adenylyltransferase of Shewanella amazonensis (strain ATCC BAA-1098 / SB2B).